A 264-amino-acid polypeptide reads, in one-letter code: 3-methyl-2-oxobutanoate hydroxymethyltransferase (264 aa).

2 residues coordinate Mg(2+): Asp45 and Asp84. 3-methyl-2-oxobutanoate is bound by residues 45 to 46 (DS), Asp84, and Lys112. Position 114 (Glu114) interacts with Mg(2+). Catalysis depends on Glu181, which acts as the Proton acceptor.

This sequence belongs to the PanB family. As to quaternary structure, homodecamer; pentamer of dimers. It depends on Mg(2+) as a cofactor.

It is found in the cytoplasm. The catalysed reaction is 3-methyl-2-oxobutanoate + (6R)-5,10-methylene-5,6,7,8-tetrahydrofolate + H2O = 2-dehydropantoate + (6S)-5,6,7,8-tetrahydrofolate. The protein operates within cofactor biosynthesis; (R)-pantothenate biosynthesis; (R)-pantoate from 3-methyl-2-oxobutanoate: step 1/2. Functionally, catalyzes the reversible reaction in which hydroxymethyl group from 5,10-methylenetetrahydrofolate is transferred onto alpha-ketoisovalerate to form ketopantoate. This Shewanella amazonensis (strain ATCC BAA-1098 / SB2B) protein is 3-methyl-2-oxobutanoate hydroxymethyltransferase.